Consider the following 668-residue polypeptide: Type II methyltransferase M.MwoI (668 aa).

Belongs to the N(4)/N(6)-methyltransferase family. N(4) subfamily.

It catalyses the reaction a 2'-deoxycytidine in DNA + S-adenosyl-L-methionine = an N(4)-methyl-2'-deoxycytidine in DNA + S-adenosyl-L-homocysteine + H(+). Its function is as follows. A beta subtype methylase, recognizes the double-stranded DNA sequence 5'-GCNNNNNNNGC-3', methylates C-2 on both strands, and protects the DNA from cleavage by the MwoI endonuclease. This Methanothermobacter wolfeii (Methanobacterium wolfei) protein is Type II methyltransferase M.MwoI.